We begin with the raw amino-acid sequence, 452 residues long: MRLSDLRGRTVAVWGAGREGRAAVIAIAAHGPADLVAVDDSANFLALPWEGPLAEAAPLVTGEEGFARLAAAEVVVRSPGVPNTHPWLVELRGRGVTVTQGSALWMADHARRTVGVTGSKGKSTTSSLISHLLTAVDRPNVFGGNIGVPLLDLPDADLYVLELSSYQCADLTDSPRVAVVTALFPEHLDAHGGEREYYRDKLNLLAHGPQTIVVNGADPRLAAELGDRPAVRAGSPDTTHVAPGPDGTPWFHLGDRPLFPRAVLPLVGRHNEGNLCVALAVLAALGVDVVARADALAVAVAGFQGLAHRLTEIADPSGLTFVDDTLATSPYAAMHAIDAYEGRPVTVIVGGADRGLDYAPLREHLAEREITVLGIPDSGQRIVATLAGLPRVRAEVVDDLVAAVRRARELTPADGVVLLSPAAPSYGRFRNFEHRSEVFAEAVRDTAGHPAR.

Residue 118 to 124 (GSKGKST) participates in ATP binding.

This sequence belongs to the MurCDEF family. MurD2 subfamily.

Its subcellular location is the cytoplasm. The catalysed reaction is UDP-N-acetyl-alpha-D-muramoyl-L-alanine + L-glutamate + ATP = UDP-N-acetyl-alpha-D-muramoyl-L-alanyl-L-glutamate + ADP + phosphate + H(+). It participates in cell wall biogenesis; peptidoglycan biosynthesis. Its function is as follows. Cell wall formation. Catalyzes the addition of L-glutamate to the nucleotide precursor UDP-N-acetylmuramoyl-L-alanine. In Micromonospora sp. (strain ATCC 39149 / NRRL 15099 / SCC 1413), this protein is UDP-N-acetylmuramoyl-L-alanine--L-glutamate ligase.